An 84-amino-acid polypeptide reads, in one-letter code: Large ribosomal subunit protein bL31 (84 aa).

Residues Cys16, Cys18, Cys38, and Cys41 each contribute to the Zn(2+) site.

The protein belongs to the bacterial ribosomal protein bL31 family. Type A subfamily. Part of the 50S ribosomal subunit. Requires Zn(2+) as cofactor.

Functionally, binds the 23S rRNA. This is Large ribosomal subunit protein bL31 from Mycobacterium leprae (strain Br4923).